We begin with the raw amino-acid sequence, 257 residues long: Pyridoxine 5'-phosphate synthase (257 aa).

A 3-amino-2-oxopropyl phosphate-binding site is contributed by N16. A 1-deoxy-D-xylulose 5-phosphate-binding site is contributed by 18–19 (DH). R27 is a 3-amino-2-oxopropyl phosphate binding site. H52 functions as the Proton acceptor in the catalytic mechanism. Residues R54 and H59 each coordinate 1-deoxy-D-xylulose 5-phosphate. E79 (proton acceptor) is an active-site residue. T109 is a binding site for 1-deoxy-D-xylulose 5-phosphate. Catalysis depends on H200, which acts as the Proton donor. 3-amino-2-oxopropyl phosphate contacts are provided by residues G201 and 222–223 (GH).

The protein belongs to the PNP synthase family. As to quaternary structure, homooctamer; tetramer of dimers.

The protein localises to the cytoplasm. The catalysed reaction is 3-amino-2-oxopropyl phosphate + 1-deoxy-D-xylulose 5-phosphate = pyridoxine 5'-phosphate + phosphate + 2 H2O + H(+). The protein operates within cofactor biosynthesis; pyridoxine 5'-phosphate biosynthesis; pyridoxine 5'-phosphate from D-erythrose 4-phosphate: step 5/5. Its function is as follows. Catalyzes the complicated ring closure reaction between the two acyclic compounds 1-deoxy-D-xylulose-5-phosphate (DXP) and 3-amino-2-oxopropyl phosphate (1-amino-acetone-3-phosphate or AAP) to form pyridoxine 5'-phosphate (PNP) and inorganic phosphate. The polypeptide is Pyridoxine 5'-phosphate synthase (Burkholderia pseudomallei (strain K96243)).